A 315-amino-acid chain; its full sequence is Methionyl-tRNA formyltransferase (315 aa).

Serine 113–proline 116 contacts (6S)-5,6,7,8-tetrahydrofolate.

This sequence belongs to the Fmt family.

The enzyme catalyses L-methionyl-tRNA(fMet) + (6R)-10-formyltetrahydrofolate = N-formyl-L-methionyl-tRNA(fMet) + (6S)-5,6,7,8-tetrahydrofolate + H(+). In terms of biological role, attaches a formyl group to the free amino group of methionyl-tRNA(fMet). The formyl group appears to play a dual role in the initiator identity of N-formylmethionyl-tRNA by promoting its recognition by IF2 and preventing the misappropriation of this tRNA by the elongation apparatus. The protein is Methionyl-tRNA formyltransferase of Escherichia coli O139:H28 (strain E24377A / ETEC).